Consider the following 880-residue polypeptide: DNA polymerase I (880 aa).

The 5'-3' exonuclease domain maps to 174–268 (TPEQIIDMKG…SGLEYQGFNR (95 aa)). Positions 302 to 470 (DINVKTVTDV…LREKLVQELE (169 aa)) constitute a 3'-5' exonuclease domain.

Belongs to the DNA polymerase type-A family. In terms of assembly, single-chain monomer with multiple functions.

It catalyses the reaction DNA(n) + a 2'-deoxyribonucleoside 5'-triphosphate = DNA(n+1) + diphosphate. In terms of biological role, in addition to polymerase activity, this DNA polymerase exhibits 3'-5' and 5'-3' exonuclease activity. The polypeptide is DNA polymerase I (polA) (Bacillus subtilis (strain 168)).